The sequence spans 168 residues: Large ribosomal subunit protein uL10 (168 aa).

Belongs to the universal ribosomal protein uL10 family. As to quaternary structure, part of the ribosomal stalk of the 50S ribosomal subunit. The N-terminus interacts with L11 and the large rRNA to form the base of the stalk. The C-terminus forms an elongated spine to which L12 dimers bind in a sequential fashion forming a multimeric L10(L12)X complex.

Its function is as follows. Forms part of the ribosomal stalk, playing a central role in the interaction of the ribosome with GTP-bound translation factors. The chain is Large ribosomal subunit protein uL10 from Ralstonia pickettii (strain 12J).